Consider the following 285-residue polypeptide: MSIHGILGEQTTDYPTEYSPETLYPIARSMGRDVIGWQNDKLEVGVDWWQAFELSWLNQQGISQVAIARFGIPANSPFIVESKSLKLYLNSINFTEFGSWAEVQKLIAEDLSKCVQAEVQVELFHLADRHSGLLIAQPDGICIDDALVNSTEKVALMLHPDASLLERDSSDAQISDGKTFSFYSNLLRSNCPVTNQPDWAALAVSITSKKVVNQANMLRYILSFRQHNGFHEQCVEQIFADLSQYYEPSKLMVRAWYTRRGGIDINPCRVSDIALLPVPSRLIRQ.

A substrate-binding site is contributed by 80–82; sequence VES. An NADPH-binding site is contributed by 82–83; that stretch reads SK. The active-site Thioimide intermediate is Cys191. The active-site Proton donor is Asp198. Residue 231–232 participates in substrate binding; the sequence is HE. 260-261 contacts NADPH; sequence RG.

The protein belongs to the GTP cyclohydrolase I family. QueF type 2 subfamily. As to quaternary structure, homodimer.

The protein resides in the cytoplasm. It carries out the reaction 7-aminomethyl-7-carbaguanine + 2 NADP(+) = 7-cyano-7-deazaguanine + 2 NADPH + 3 H(+). Its pathway is tRNA modification; tRNA-queuosine biosynthesis. Functionally, catalyzes the NADPH-dependent reduction of 7-cyano-7-deazaguanine (preQ0) to 7-aminomethyl-7-deazaguanine (preQ1). This chain is NADPH-dependent 7-cyano-7-deazaguanine reductase, found in Psychrobacter arcticus (strain DSM 17307 / VKM B-2377 / 273-4).